Consider the following 108-residue polypeptide: Cytochrome c6 (108 aa).

The first 23 residues, 1-23, serve as a signal peptide directing secretion; it reads MRLLFAFFIICHIFTNNVQLTFA. Cys-37, Cys-40, His-41, and Met-81 together coordinate heme c.

Belongs to the cytochrome c family. PetJ subfamily. Monomer. Binds 1 heme c group covalently per subunit.

The protein resides in the plastid. It is found in the chloroplast thylakoid lumen. Functions as an electron carrier between membrane-bound cytochrome b6-f and photosystem I in oxygenic photosynthesis. This chain is Cytochrome c6, found in Gracilaria tenuistipitata var. liui (Red alga).